We begin with the raw amino-acid sequence, 279 residues long: Oxygen-dependent coproporphyrinogen-III oxidase (279 aa).

Serine 102 contacts substrate. A divalent metal cation-binding residues include histidine 106 and histidine 116. Histidine 116 functions as the Proton donor in the catalytic mechanism. 118–120 (NTR) is a substrate binding site. Positions 149 and 179 each coordinate a divalent metal cation. Residues 244–279 (YVEFNLLYDRGTKFGLMTDGNVEAILMSLPPVVKFN) form an important for dimerization region.

It belongs to the aerobic coproporphyrinogen-III oxidase family. In terms of assembly, homodimer. A divalent metal cation is required as a cofactor.

Its subcellular location is the cytoplasm. The enzyme catalyses coproporphyrinogen III + O2 + 2 H(+) = protoporphyrinogen IX + 2 CO2 + 2 H2O. It participates in porphyrin-containing compound metabolism; protoporphyrin-IX biosynthesis; protoporphyrinogen-IX from coproporphyrinogen-III (O2 route): step 1/1. In terms of biological role, involved in the heme biosynthesis. Catalyzes the aerobic oxidative decarboxylation of propionate groups of rings A and B of coproporphyrinogen-III to yield the vinyl groups in protoporphyrinogen-IX. This Rickettsia prowazekii (strain Madrid E) protein is Oxygen-dependent coproporphyrinogen-III oxidase.